The sequence spans 213 residues: C-type lectin domain family 4 member C (213 aa).

At 1–21 the chain is on the cytoplasmic side; that stretch reads MVPEEEPQDREKGLWWFQLKV. Residues 22 to 44 form a helical; Signal-anchor for type II membrane protein membrane-spanning segment; it reads WSMAVVSILLLSVCFTVSSVVPH. At 45 to 213 the chain is on the extracellular side; it reads NFMYSKTVKR…SICKMKKIYI (169 aa). 2 disulfide bridges follow: Cys-70-Cys-82 and Cys-83-Cys-94. The 118-residue stretch at 90-207 folds into the C-type lectin domain; that stretch reads FQSSCYFIST…CHVPQKSICK (118 aa). N-linked (GlcNAc...) asparagine glycans are attached at residues Asn-110 and Asn-137. 2 disulfide bridges follow: Cys-111–Cys-206 and Cys-180–Cys-198. Ser-139 contacts a carbohydrate. Asn-164 carries N-linked (GlcNAc...) asparagine glycosylation. Ca(2+) is bound by residues Glu-172, Asn-174, and Glu-178. Residues Glu-178, 184–186, Asn-194, 194–195, and Gln-202 contribute to the a carbohydrate site; these read NFR and ND. The Ca(2+) site is built by Asn-194 and Asp-195.

As to quaternary structure, homodimer. As to expression, expressed in plasmacytoid dendritic cells (PDCs). Constitutively expressed in immature monocyte-derived dendritic cells (iMDDC) and is significantly down-regulated upon maturation with LPS but not with TNF-alpha.

Its subcellular location is the cell membrane. Its function is as follows. Lectin-type cell surface receptor which may play a role in antigen capturing by dendritic cells. Specifically recognizes non-sialylated galactose-terminated biantennary glycans containing the trisaccharide epitope Gal(beta1-3/4)GlcNAc(beta1-2)Man. Binds to serum IgG. Efficiently targets ligand into antigen-processing and peptide-loading compartments for presentation to T-cells. May mediate potent inhibition of induction of IFN-alpha/beta expression in plasmacytoid dendritic cells. May act as a signaling receptor that activates protein-tyrosine kinases and mobilizes intracellular calcium. In Homo sapiens (Human), this protein is C-type lectin domain family 4 member C (CLEC4C).